The sequence spans 278 residues: Neuronal membrane glycoprotein M6-a (278 aa).

The residue at position 1 (M1) is an N-acetylmethionine. Over M1–L22 the chain is Cytoplasmic. A helical membrane pass occupies residues G23 to F43. Topologically, residues C44 to V84 are extracellular. Residues I85 to F105 traverse the membrane as a helical segment. The Cytoplasmic segment spans residues T106 to S127. The helical transmembrane segment at A128 to T148 threads the bilayer. Residues S149–L213 lie on the Extracellular side of the membrane. Residue N164 is glycosylated (N-linked (GlcNAc...) asparagine). Residues C174 and C192 are joined by a disulfide bond. N-linked (GlcNAc...) asparagine glycosylation is present at N208. Residues F214–V234 form a helical membrane-spanning segment. Residues L235–T278 are Cytoplasmic-facing. The residue at position 256 (S256) is a Phosphoserine. Residue T278 is modified to Phosphothreonine.

The protein belongs to the myelin proteolipid protein family. As to quaternary structure, interacts with OPRM1. Interacts with palmitoyltransferase ZDHHC17/HIP14; the interaction leads to palmitoylation of GPM6A. In terms of processing, N-glycosylated. Palmitoylated by ZDHHC17/HIP14. In terms of tissue distribution, expressed in hippocampus (at protein level). Isoform 1 is the predominant isoform expressed in brain, specifically in hippocampus. Isoform 2 is expressed at low levels in brain and kidney.

It is found in the cell membrane. The protein localises to the cell projection. Its subcellular location is the axon. It localises to the growth cone. The protein resides in the dendritic spine. It is found in the filopodium. The protein localises to the neuron projection. In terms of biological role, involved in neuronal differentiation, including differentiation and migration of neuronal stem cells. Plays a role in neuronal plasticity and is involved in neurite and filopodia outgrowth, filopodia motility and probably synapse formation. Gpm6a-induced filopodia formation involves mitogen-activated protein kinase (MAPK) and Src signaling pathways. May be involved in neuronal NGF-dependent Ca(2+) influx. May be involved in regulation of endocytosis and intracellular trafficking of G-protein-coupled receptors (GPCRs); enhances internalization and recycling of mu-type opioid receptor. In Rattus norvegicus (Rat), this protein is Neuronal membrane glycoprotein M6-a (Gpm6a).